The following is a 937-amino-acid chain: AP-2 complex subunit beta (937 aa).

Thr2 carries the post-translational modification N-acetylthreonine. Ser4 carries the phosphoserine modification. Lys265 carries the post-translational modification N6-acetyllysine. Residues Tyr737 and Tyr928 each carry the phosphotyrosine modification.

It belongs to the adaptor complexes large subunit family. Adapter protein complex 2 (AP-2) is a heterotetramer composed of two large adaptins (alpha-type subunit AP2A1 or AP2A2 and beta-type subunit AP2B1), a medium adaptin (mu-type subunit AP2M1) and a small adaptin (sigma-type subunit AP2S1). Interacts with EPN1. Interacts with EPS15; clathrin competes with EPS15. Interacts with SNAP91; clathrin competes with SNAP91. Interacts with CLTC; clathrin competes with EPS15, SNAP91 and PIP5K1C. Interacts with LDLRAP1. Interacts with AMPH and BIN1. Interacts with ARF6 (GDP-bound). Interacts (dephosphorylated at Tyr-737) with ARRB1; phosphorylation of AP2B1 at Tyr-737 disrupts the interaction. Interacts with SLC2A8. Interacts with SCYL1 and SCYL2. Interacts with TGFBR1 and TGFBR2. Interacts with PIP5K1C; clathrin competes with PIP5K1C. Interacts with DENND1B. Interacts with FCHO1. Interacts with RFTN1. Interacts with KIAA1107. Together with AP2A1 or AP2A2 and AP2M1, it interacts with ADAM10; this interaction facilitates ADAM10 endocytosis from the plasma membrane during long-term potentiation in hippocampal neurons. The N-terminus is blocked. In terms of processing, phosphorylation at Tyr-737 by SRC occurs at the plasma membrane in clathrin-coated vesicles (CCVs).

It is found in the cell membrane. It localises to the membrane. Its subcellular location is the coated pit. Its function is as follows. Component of the adaptor protein complex 2 (AP-2). Adaptor protein complexes function in protein transport via transport vesicles in different membrane traffic pathways. Adaptor protein complexes are vesicle coat components and appear to be involved in cargo selection and vesicle formation. AP-2 is involved in clathrin-dependent endocytosis in which cargo proteins are incorporated into vesicles surrounded by clathrin (clathrin-coated vesicles, CCVs) which are destined for fusion with the early endosome. The clathrin lattice serves as a mechanical scaffold but is itself unable to bind directly to membrane components. Clathrin-associated adaptor protein (AP) complexes which can bind directly to both the clathrin lattice and to the lipid and protein components of membranes are considered to be the major clathrin adaptors contributing the CCV formation. AP-2 also serves as a cargo receptor to selectively sort the membrane proteins involved in receptor-mediated endocytosis. AP-2 seems to play a role in the recycling of synaptic vesicle membranes from the presynaptic surface. AP-2 recognizes Y-X-X-[FILMV] (Y-X-X-Phi) and [ED]-X-X-X-L-[LI] endocytosis signal motifs within the cytosolic tails of transmembrane cargo molecules. AP-2 may also play a role in maintaining normal post-endocytic trafficking through the ARF6-regulated, non-clathrin pathway. During long-term potentiation in hippocampal neurons, AP-2 is responsible for the endocytosis of ADAM10. The AP-2 beta subunit acts via its C-terminal appendage domain as a scaffolding platform for endocytic accessory proteins; at least some clathrin-associated sorting proteins (CLASPs) are recognized by their [DE]-X(1,2)-F-X-X-[FL]-X-X-X-R motif. The AP-2 beta subunit binds to clathrin heavy chain, promoting clathrin lattice assembly; clathrin displaces at least some CLASPs from AP2B1 which probably then can be positioned for further coat assembly. The polypeptide is AP-2 complex subunit beta (AP2B1) (Bos taurus (Bovine)).